A 388-amino-acid polypeptide reads, in one-letter code: Flavin oxidoreductase hxnT (388 aa).

It belongs to the NADH:flavin oxidoreductase/NADH oxidase family. Requires FMN as cofactor.

In terms of biological role, flavin oxidoreductase, part of the hnx cluster involved in the purine degradation. The nicotinate hydroxylase hnxS accepts nicotinate as a substrate and catalyzes the first step of nicotinate catabolism. The major facilitator-type transporters hxnP and hxnZ are probably involved in the uptake of nicotinate-derived metabolites, and the oxidoreductases hxnT and hxnY in the further metabolism of 6-OH nicotinic acid. The chain is Flavin oxidoreductase hxnT from Emericella nidulans (strain FGSC A4 / ATCC 38163 / CBS 112.46 / NRRL 194 / M139) (Aspergillus nidulans).